The chain runs to 151 residues: Large ribosomal subunit protein uL22 (151 aa).

The interval 1–25 (MARINYSVKEDPETTSKAMGSELHI) is disordered.

Belongs to the universal ribosomal protein uL22 family. As to quaternary structure, part of the 50S ribosomal subunit.

In terms of biological role, this protein binds specifically to 23S rRNA. It makes multiple contacts with different domains of the 23S rRNA in the assembled 50S subunit and ribosome. The globular domain of the protein is located near the polypeptide exit tunnel on the outside of the subunit, while an extended beta-hairpin is found that lines the wall of the exit tunnel in the center of the 70S ribosome. This Methanosarcina barkeri (strain Fusaro / DSM 804) protein is Large ribosomal subunit protein uL22.